Consider the following 348-residue polypeptide: S-adenosylmethionine:tRNA ribosyltransferase-isomerase (348 aa).

It belongs to the QueA family. Monomer.

The protein resides in the cytoplasm. The catalysed reaction is 7-aminomethyl-7-carbaguanosine(34) in tRNA + S-adenosyl-L-methionine = epoxyqueuosine(34) in tRNA + adenine + L-methionine + 2 H(+). Its pathway is tRNA modification; tRNA-queuosine biosynthesis. Its function is as follows. Transfers and isomerizes the ribose moiety from AdoMet to the 7-aminomethyl group of 7-deazaguanine (preQ1-tRNA) to give epoxyqueuosine (oQ-tRNA). The sequence is that of S-adenosylmethionine:tRNA ribosyltransferase-isomerase from Alteromonas mediterranea (strain DSM 17117 / CIP 110805 / LMG 28347 / Deep ecotype).